We begin with the raw amino-acid sequence, 311 residues long: Thymidylate synthase (311 aa).

DUMP is bound by residues arginine 28 and 172 to 173; that span reads RR. Cysteine 192 acts as the Nucleophile in catalysis. Residues 213 to 216, asparagine 224, and 254 to 256 each bind dUMP; these read RSCD and HLY. Aspartate 216 lines the (6R)-5,10-methylene-5,6,7,8-tetrahydrofolate pocket. Residue alanine 310 coordinates (6R)-5,10-methylene-5,6,7,8-tetrahydrofolate.

Belongs to the thymidylate synthase family. Bacterial-type ThyA subfamily. In terms of assembly, homodimer.

It is found in the cytoplasm. It catalyses the reaction dUMP + (6R)-5,10-methylene-5,6,7,8-tetrahydrofolate = 7,8-dihydrofolate + dTMP. It participates in pyrimidine metabolism; dTTP biosynthesis. In terms of biological role, catalyzes the reductive methylation of 2'-deoxyuridine-5'-monophosphate (dUMP) to 2'-deoxythymidine-5'-monophosphate (dTMP) while utilizing 5,10-methylenetetrahydrofolate (mTHF) as the methyl donor and reductant in the reaction, yielding dihydrofolate (DHF) as a by-product. This enzymatic reaction provides an intracellular de novo source of dTMP, an essential precursor for DNA biosynthesis. The protein is Thymidylate synthase of Sphingopyxis alaskensis (strain DSM 13593 / LMG 18877 / RB2256) (Sphingomonas alaskensis).